A 958-amino-acid polypeptide reads, in one-letter code: Importin-13 (958 aa).

20 HEAT repeats span residues 19 to 49 (ENVEKALHQLYYDPNIENKNLAQKWLMQAQV), 51 to 83 (PQAWHFSWLLLNMDKVPEIQYSAPAPCTSRSPA), 90 to 130 (PDQY…LSMM), 137 to 174 (AVADMVRMFQAEDSNVDGRARCLALLELLTVLPEEFQT), 189 to 226 (LAQECGSVFPLLEQLLQQQDSPGFIKQKVLKCFSSWVQ), 231 to 263 (LMDCENLIQAAFTSLQDPELFDTAVEAVVNAIS), 271 to 320 (VNTL…ALLD), 325 to 367 (WQSF…DDIL), 370 to 433 (EPDK…YEML), 435 to 471 (AELLSSLYDKLGRLLTNTEQPSTWQHTEALLYGFQSI), 482 to 517 (VVPGLIGLIPRISISNVQLADTVMFTIGALSEWLAD), 519 to 553 (PVMINNVLPLVLQALGNPELSISSVSTLKKICREC), 557 to 595 (LPPYAANIVAVSQEVLMKQIHKTSQCMWLMQALGFLLSA), 598 to 643 (VEEI…SNLF), 671 to 711 (PVVV…VKTL), 715 to 749 (FAPMVPQLCEMLGQMYSTIPQASAIDLTRQLVHIF), 756 to 798 (FPPI…ALKR), 810 to 840 (VKALFHCGVLSLKFPEAPTVKASCGFFTELL), 855 to 888 (ENGKVLLQAVLEGVGGQASRSLMDHFAEILFALN), and 892 to 926 (FSYLSIWIKEAMQQDGFPSARVSPEQKETFSQQIL). The 67-residue stretch at 40 to 106 (AQKWLMQAQV…KSQLFTHITR (67 aa)) folds into the Importin N-terminal domain.

The protein belongs to the importin beta family.

Its subcellular location is the cytoplasm. The protein localises to the nucleus. Functions in nuclear protein import as nuclear transport receptor. Serves as receptor for nuclear localization signals (NLS) in cargo substrates. Is thought to mediate docking of the importin/substrate complex to the nuclear pore complex (NPC) through binding to nucleoporin and the complex is subsequently translocated through the pore by an energy requiring, Ran-dependent mechanism. At the nucleoplasmic side of the NPC, Ran binds to the importin, the importin/substrate complex dissociates and importin is re-exported from the nucleus to the cytoplasm where GTP hydrolysis releases Ran. The directionality of nuclear import is thought to be conferred by an asymmetric distribution of the GTP- and GDP-bound forms of Ran between the cytoplasm and nucleus. This Gallus gallus (Chicken) protein is Importin-13 (IPO13).